Consider the following 148-residue polypeptide: Nucleoside diphosphate kinase A (148 aa).

ATP-binding residues include lysine 9, phenylalanine 57, arginine 85, threonine 91, arginine 102, and asparagine 112. Histidine 115 functions as the Pros-phosphohistidine intermediate in the catalytic mechanism.

The protein belongs to the NDK family. It depends on Mg(2+) as a cofactor.

It catalyses the reaction a 2'-deoxyribonucleoside 5'-diphosphate + ATP = a 2'-deoxyribonucleoside 5'-triphosphate + ADP. The enzyme catalyses a ribonucleoside 5'-diphosphate + ATP = a ribonucleoside 5'-triphosphate + ADP. Major role in the synthesis of nucleoside triphosphates other than ATP. The ATP gamma phosphate is transferred to the NDP beta phosphate via a ping-pong mechanism, using a phosphorylated active-site intermediate. The polypeptide is Nucleoside diphosphate kinase A (Flaveria bidentis (Coastal plain yellowtops)).